The chain runs to 25 residues: Caerin-2.3 (25 aa).

In terms of tissue distribution, expressed by the skin parotoid and/or rostral glands.

It is found in the secreted. Its function is as follows. Acts as a male sex pheromone that attracts females. Has no antimicrobial activity. This Ranoidea caerulea (Green tree frog) protein is Caerin-2.3.